Here is a 449-residue protein sequence, read N- to C-terminus: MDADLKNLWDKTLDIIKSELSEVSFNTWIKSCEPLSISSNTLKISVPNSFTQDILDKRYKDLVANSIKAVCSKLYTIEFIIMSEIYEKEEIKSSSNQKSKAIVVNDEMSSTLNPKYTFNSFVIGNSNRFAHAASLAVAESPAKAYNPLFIYGGVGLGKTHLMHAIGHYILDGNPNAKVVYVSSEKFTNELINAIKDDKNEEFRNKYRNVDILLIDDIQFIAGKERTQEEFFHTFNALHDANKQIILSSDRPPKEIPTLEDRLRSRFEWGLIADIQVPDFETRMAILKKKADVENLNVANEVMGYIATKIKSNIRELEGALIRIIAYSSLTNREVTVDLATEALKDIISKKQGKHVTIDLIQDVVSSYFNLRVEDLKSQRRTRNVAYPRQIAMYLSRKLTDMSLPKIGEEFGGRDHTTVIHAYEKISENLKTDDSLQSTVNDITKKLTQN.

The segment at 1 to 73 (MDADLKNLWD…ANSIKAVCSK (73 aa)) is domain I, interacts with DnaA modulators. The segment at 73-110 (KLYTIEFIIMSEIYEKEEIKSSSNQKSKAIVVNDEMSS) is domain II. The interval 111–327 (TLNPKYTFNS…GALIRIIAYS (217 aa)) is domain III, AAA+ region. Positions 155, 157, 158, and 159 each coordinate ATP. The tract at residues 328–449 (SLTNREVTVD…NDITKKLTQN (122 aa)) is domain IV, binds dsDNA.

This sequence belongs to the DnaA family. As to quaternary structure, oligomerizes as a right-handed, spiral filament on DNA at oriC.

It is found in the cytoplasm. Its function is as follows. Plays an essential role in the initiation and regulation of chromosomal replication. ATP-DnaA binds to the origin of replication (oriC) to initiate formation of the DNA replication initiation complex once per cell cycle. Binds the DnaA box (a 9 base pair repeat at the origin) and separates the double-stranded (ds)DNA. Forms a right-handed helical filament on oriC DNA; dsDNA binds to the exterior of the filament while single-stranded (ss)DNA is stabiized in the filament's interior. The ATP-DnaA-oriC complex binds and stabilizes one strand of the AT-rich DNA unwinding element (DUE), permitting loading of DNA polymerase. After initiation quickly degrades to an ADP-DnaA complex that is not apt for DNA replication. Binds acidic phospholipids. The sequence is that of Chromosomal replication initiator protein DnaA from Clostridium beijerinckii (strain ATCC 51743 / NCIMB 8052) (Clostridium acetobutylicum).